The chain runs to 157 residues: Molybdopterin synthase catalytic subunit (157 aa).

Residues 103-104 (HR), Lys119, and 126-128 (KKE) each bind substrate.

It belongs to the MoaE family. MOCS2B subfamily. In terms of assembly, heterotetramer; composed of 2 small (MOCS2A) and 2 large (MOCS2B) subunits.

The protein localises to the cytoplasm. It carries out the reaction 2 [molybdopterin-synthase sulfur-carrier protein]-C-terminal-Gly-aminoethanethioate + cyclic pyranopterin phosphate + H2O = molybdopterin + 2 [molybdopterin-synthase sulfur-carrier protein]-C-terminal Gly-Gly + 2 H(+). It functions in the pathway cofactor biosynthesis; molybdopterin biosynthesis. Its function is as follows. Catalytic subunit of the molybdopterin synthase complex, a complex that catalyzes the conversion of precursor Z into molybdopterin. Acts by mediating the incorporation of 2 sulfur atoms from thiocarboxylated MOCS2A into precursor Z to generate a dithiolene group. This chain is Molybdopterin synthase catalytic subunit, found in Culex quinquefasciatus (Southern house mosquito).